Consider the following 268-residue polypeptide: Ribosomal RNA small subunit methyltransferase A (268 aa).

S-adenosyl-L-methionine contacts are provided by Asn18, Leu20, Gly45, Glu66, Asp91, and Asn112.

It belongs to the class I-like SAM-binding methyltransferase superfamily. rRNA adenine N(6)-methyltransferase family. RsmA subfamily.

The protein localises to the cytoplasm. The catalysed reaction is adenosine(1518)/adenosine(1519) in 16S rRNA + 4 S-adenosyl-L-methionine = N(6)-dimethyladenosine(1518)/N(6)-dimethyladenosine(1519) in 16S rRNA + 4 S-adenosyl-L-homocysteine + 4 H(+). Specifically dimethylates two adjacent adenosines (A1518 and A1519) in the loop of a conserved hairpin near the 3'-end of 16S rRNA in the 30S particle. May play a critical role in biogenesis of 30S subunits. This chain is Ribosomal RNA small subunit methyltransferase A, found in Shewanella frigidimarina (strain NCIMB 400).